Consider the following 38-residue polypeptide: Glucagon-like peptide (38 aa).

This sequence belongs to the glucagon family.

It is found in the secreted. This Hydrolagus colliei (Spotted ratfish) protein is Glucagon-like peptide.